A 990-amino-acid polypeptide reads, in one-letter code: TonB-dependent receptor P26 (990 aa).

Residues 86 to 93 carry the TonB box motif; sequence DEVVVIGY. The TBDR plug domain occupies 97 to 213; the sequence is RKSDLTGSVS…ANGVVLVTTK (117 aa). The TBDR beta-barrel domain occupies 220-990; it reads SSKPEVSANI…TITLGLNVTF (771 aa). A disordered region spans residues 878 to 902; that stretch reads TPENPTSDIPRAGGDSVTGTPPNSA. A TonB C-terminal box motif is present at residues 974 to 990; the sequence is GSYPNPRTITLGLNVTF.

Belongs to the TonB-dependent receptor family.

It is found in the cell outer membrane. Functionally, tonB-dependent receptor probably involved in ulvan degradation. Ulvan is the main polysaccharide component of the Ulvales (green seaweed) cell wall. It is composed of disaccharide building blocks comprising 3-sulfated rhamnose (Rha3S) linked to D-glucuronic acid (GlcA), L-iduronic acid (IduA), or D-xylose (Xyl). The TonB-dependent receptor may mediate transport of ulvan oligosaccharides from the surface of the outer membrane to the periplasm for subsequent degradation. This is TonB-dependent receptor P26 from Formosa agariphila (strain DSM 15362 / KCTC 12365 / LMG 23005 / KMM 3901 / M-2Alg 35-1).